Consider the following 124-residue polypeptide: Ribonuclease pancreatic (124 aa).

Basic and acidic residues predominate over residues Lys1–Met13. Residues Lys1–Ser23 form a disordered region. Positions 7 and 10 each coordinate substrate. Residue His12 is the Proton acceptor of the active site. Disulfide bonds link Cys26–Cys84, Cys40–Cys95, Cys58–Cys110, and Cys65–Cys72. N-linked (GlcNAc...) asparagine glycosylation is present at Asn34. Residues Lys41–Thr45, Lys66, and Arg85 each bind substrate. His119 functions as the Proton donor in the catalytic mechanism.

This sequence belongs to the pancreatic ribonuclease family. As to quaternary structure, monomer. Interacts with and forms tight 1:1 complexes with RNH1. Dimerization of two such complexes may occur. Interaction with RNH1 inhibits this protein. As to expression, pancreas.

The protein localises to the secreted. It carries out the reaction an [RNA] containing cytidine + H2O = an [RNA]-3'-cytidine-3'-phosphate + a 5'-hydroxy-ribonucleotide-3'-[RNA].. It catalyses the reaction an [RNA] containing uridine + H2O = an [RNA]-3'-uridine-3'-phosphate + a 5'-hydroxy-ribonucleotide-3'-[RNA].. Functionally, endonuclease that catalyzes the cleavage of RNA on the 3' side of pyrimidine nucleotides. Acts on single-stranded and double-stranded RNA. The chain is Ribonuclease pancreatic (RNASE1) from Alces alces alces (European moose).